A 617-amino-acid chain; its full sequence is Acetolactate synthase large subunit (617 aa).

Glu71 contributes to the thiamine diphosphate binding site. Residues Arg173, His281–Arg302, and Glu324–Asp343 contribute to the FAD site. The interval Gln413 to Trp492 is thiamine pyrophosphate binding. Positions 463 and 490 each coordinate Mg(2+).

Belongs to the TPP enzyme family. As to quaternary structure, dimer of large and small chains. The cofactor is Mg(2+). It depends on thiamine diphosphate as a cofactor.

The enzyme catalyses 2 pyruvate + H(+) = (2S)-2-acetolactate + CO2. Its pathway is amino-acid biosynthesis; L-isoleucine biosynthesis; L-isoleucine from 2-oxobutanoate: step 1/4. The protein operates within amino-acid biosynthesis; L-valine biosynthesis; L-valine from pyruvate: step 1/4. The protein is Acetolactate synthase large subunit (ilvB) of Parasynechococcus marenigrum (strain WH8102).